A 294-amino-acid chain; its full sequence is Nucleotide-binding protein CLL_A3342 (294 aa).

Residue 8 to 15 coordinates ATP; that stretch reads GLSGAGKT. Residue 59–62 participates in GTP binding; that stretch reads DIRG.

It belongs to the RapZ-like family.

In terms of biological role, displays ATPase and GTPase activities. This chain is Nucleotide-binding protein CLL_A3342, found in Clostridium botulinum (strain Eklund 17B / Type B).